The primary structure comprises 216 residues: MAKIQLVAQANLPTEYGIFKMVGFEFLDTKKEHVALVMGDISNADEPVLARIHSECLTGDALHSLKCDCGFQLATALKQIQEEGRGVLIYHREEGRGIGLINKIRAYSLQDKGMDTIEANLALGFKADERNFEVCADMFELLGVKKVRLMTNNPEKVETMKKAGINVVERVPLNVGENRYNTKYLDTKAKKMGHYIVHNNDEQHLMTCPHCQEEII.

51-55 (RIHSE) provides a ligand contact to GTP. Zn(2+) contacts are provided by cysteine 56, cysteine 67, and cysteine 69. GTP contacts are provided by residues glutamine 72, 94–96 (EGR), and threonine 116. Residue aspartate 128 is the Proton acceptor of the active site. Catalysis depends on arginine 130, which acts as the Nucleophile. Threonine 151 and lysine 156 together coordinate GTP.

Belongs to the GTP cyclohydrolase II family. Zn(2+) is required as a cofactor.

The catalysed reaction is GTP + 4 H2O = 2,5-diamino-6-hydroxy-4-(5-phosphoribosylamino)-pyrimidine + formate + 2 phosphate + 3 H(+). It participates in cofactor biosynthesis; riboflavin biosynthesis; 5-amino-6-(D-ribitylamino)uracil from GTP: step 1/4. In terms of biological role, catalyzes the conversion of GTP to 2,5-diamino-6-ribosylamino-4(3H)-pyrimidinone 5'-phosphate (DARP), formate and pyrophosphate. In Haemophilus influenzae (strain PittEE), this protein is GTP cyclohydrolase-2.